The primary structure comprises 312 residues: DNA-directed RNA polymerase subunit alpha (312 aa).

Residues 1 to 226 (MIEFEKPIIT…EHLNLFTDLT (226 aa)) form an alpha N-terminal domain (alpha-NTD) region. The segment at 242–312 (NDEKLLDRTI…DLGLGLKNDK (71 aa)) is alpha C-terminal domain (alpha-CTD).

The protein belongs to the RNA polymerase alpha chain family. In terms of assembly, homodimer. The RNAP catalytic core consists of 2 alpha, 1 beta, 1 beta' and 1 omega subunit. When a sigma factor is associated with the core the holoenzyme is formed, which can initiate transcription.

It catalyses the reaction RNA(n) + a ribonucleoside 5'-triphosphate = RNA(n+1) + diphosphate. In terms of biological role, DNA-dependent RNA polymerase catalyzes the transcription of DNA into RNA using the four ribonucleoside triphosphates as substrates. The polypeptide is DNA-directed RNA polymerase subunit alpha (Streptococcus thermophilus (strain CNRZ 1066)).